Consider the following 486-residue polypeptide: Glutamyl-tRNA(Gln) amidotransferase subunit A (486 aa).

Active-site charge relay system residues include lysine 78 and serine 153. The active-site Acyl-ester intermediate is serine 177.

This sequence belongs to the amidase family. GatA subfamily. As to quaternary structure, heterotrimer of A, B and C subunits.

The enzyme catalyses L-glutamyl-tRNA(Gln) + L-glutamine + ATP + H2O = L-glutaminyl-tRNA(Gln) + L-glutamate + ADP + phosphate + H(+). Functionally, allows the formation of correctly charged Gln-tRNA(Gln) through the transamidation of misacylated Glu-tRNA(Gln) in organisms which lack glutaminyl-tRNA synthetase. The reaction takes place in the presence of glutamine and ATP through an activated gamma-phospho-Glu-tRNA(Gln). This Desulfosudis oleivorans (strain DSM 6200 / JCM 39069 / Hxd3) (Desulfococcus oleovorans) protein is Glutamyl-tRNA(Gln) amidotransferase subunit A.